Reading from the N-terminus, the 313-residue chain is Homoserine O-succinyltransferase (313 aa).

The Acyl-thioester intermediate role is filled by C142. The substrate site is built by K163 and S192. H235 serves as the catalytic Proton acceptor. E237 is an active-site residue. R249 contributes to the substrate binding site.

Belongs to the MetA family.

It localises to the cytoplasm. It carries out the reaction L-homoserine + succinyl-CoA = O-succinyl-L-homoserine + CoA. It functions in the pathway amino-acid biosynthesis; L-methionine biosynthesis via de novo pathway; O-succinyl-L-homoserine from L-homoserine: step 1/1. Functionally, transfers a succinyl group from succinyl-CoA to L-homoserine, forming succinyl-L-homoserine. This chain is Homoserine O-succinyltransferase, found in Shewanella oneidensis (strain ATCC 700550 / JCM 31522 / CIP 106686 / LMG 19005 / NCIMB 14063 / MR-1).